The chain runs to 524 residues: 2-isopropylmalate synthase (524 aa).

Positions 5 to 267 (VIIFDTTLRD…HTNIRHSEIH (263 aa)) constitute a Pyruvate carboxyltransferase domain. Mn(2+)-binding residues include D14, H202, H204, and N238. Positions 392–524 (KLEYLGVQSG…KTDKINTESV (133 aa)) are regulatory domain.

The protein belongs to the alpha-IPM synthase/homocitrate synthase family. LeuA type 1 subfamily. In terms of assembly, homodimer. It depends on Mn(2+) as a cofactor.

It is found in the cytoplasm. It catalyses the reaction 3-methyl-2-oxobutanoate + acetyl-CoA + H2O = (2S)-2-isopropylmalate + CoA + H(+). It participates in amino-acid biosynthesis; L-leucine biosynthesis; L-leucine from 3-methyl-2-oxobutanoate: step 1/4. In terms of biological role, catalyzes the condensation of the acetyl group of acetyl-CoA with 3-methyl-2-oxobutanoate (2-ketoisovalerate) to form 3-carboxy-3-hydroxy-4-methylpentanoate (2-isopropylmalate). The sequence is that of 2-isopropylmalate synthase from Aeromonas salmonicida (strain A449).